Reading from the N-terminus, the 125-residue chain is Succinate dehydrogenase cytochrome b560 subunit (125 aa).

Helical transmembrane passes span 29 to 49 (ISGVAMFTLIASPPLFLKLAT), 68 to 88 (ILPWFIVIISVIFLYHIINGI), and 104 to 124 (IIKDSNTLLALVFLIMLFKFI). Heme is bound at residue histidine 83.

It belongs to the cytochrome b560 family. Forms part of complex II containing four subunits: a 70 kDa flavoprotein (FP), a 27 kDa iron-sulfur protein (IP), a cytochrome B and a membrane-anchoring protein. Heme serves as cofactor.

It is found in the mitochondrion inner membrane. It functions in the pathway carbohydrate metabolism; tricarboxylic acid cycle. Functionally, membrane-anchoring subunit of succinate dehydrogenase (SDH) that is involved in complex II of the mitochondrial electron transport chain and is responsible for transferring electrons from succinate to ubiquinone (coenzyme Q). This Porphyra purpurea (Red seaweed) protein is Succinate dehydrogenase cytochrome b560 subunit (SDH3).